A 395-amino-acid chain; its full sequence is Probable inactive serine/threonine-protein kinase DDB_G0293746 (395 aa).

The Protein kinase domain maps to 9 to 395 (YSEIDLISDN…ITQFIIDYLF (387 aa)). Residues 15 to 23 (ISDNPFKNY) and Lys54 each bind ATP. The tract at residues 213–266 (NSSLSSLSSSTSSSSSSSSSTNCNNNTTENNNNNYNNNNNNNNNNNNNNNNNSL) is disordered.

It belongs to the protein kinase superfamily. Ser/Thr protein kinase family.

This Dictyostelium discoideum (Social amoeba) protein is Probable inactive serine/threonine-protein kinase DDB_G0293746.